The primary structure comprises 114 residues: uncharacterized protein (114 aa).

Its function is as follows. Possibly involved in pGI2 replication mechanism. This is an uncharacterized protein from Bacillus thuringiensis.